We begin with the raw amino-acid sequence, 425 residues long: 5-hydroxytryptamine receptor 7 (425 aa).

Residues 1 to 72 lie on the Extracellular side of the membrane; it reads MLIQVQPSHL…LLYGDTEKIV (72 aa). N-linked (GlcNAc...) asparagine glycosylation is found at asparagine 14, asparagine 41, and asparagine 51. Residues 73-97 form a helical membrane-spanning segment; the sequence is IGVVLSIITLFTIAGNALVIISVCI. The Cytoplasmic segment spans residues 98–107; sequence VKKLRQPSNY. The chain crosses the membrane as a helical span at residues 108-129; the sequence is LVVSLAAADLSVAVAVMPFVII. Residues 130 to 141 are Extracellular-facing; it reads TDLVGGEWLFGK. The helical transmembrane segment at 142-167 threads the bilayer; sequence VFCNVFIAMDVMCCTASIMTLCVISV. A disulfide bridge connects residues cysteine 144 and cysteine 220. Residue aspartate 151 coordinates serotonin. Residues 168-187 lie on the Cytoplasmic side of the membrane; the sequence is DRYLGITRPLTYPARQNGKL. Residues 188 to 208 traverse the membrane as a helical segment; it reads MAKMVFIVWLLSASITLPPLF. Residues 209–226 are Extracellular-facing; it reads GWAKNVNVERVCLISQDF. A helical transmembrane segment spans residues 227 to 249; that stretch reads GYTVYSTAVAFYIPMTVMLVMYQ. The Cytoplasmic portion of the chain corresponds to 250–322; sequence RIFVAAKISA…SIFKREQKAA (73 aa). The helical transmembrane segment at 323–348 threads the bilayer; that stretch reads RTLGIIVGAFTFCWLPFFLLSTARPF. The Extracellular segment spans residues 349–359; it reads ICGIMCSCMPL. A helical transmembrane segment spans residues 360 to 383; the sequence is RLERTLLWLGYTNSLINPLIYAFF. The Cytoplasmic segment spans residues 384–425; sequence NRDLRTTFWNLLRCKYTNINRRLSAASMHEALKVTERHEGIL. Residue cysteine 397 is the site of S-palmitoyl cysteine attachment.

Belongs to the G-protein coupled receptor 1 family.

It localises to the cell membrane. Functionally, G-protein coupled receptor for 5-hydroxytryptamine (serotonin), a biogenic hormone that functions as a neurotransmitter, a hormone and a mitogen. Ligand binding causes a conformation change that triggers signaling via guanine nucleotide-binding proteins (G proteins) and modulates the activity of downstream effectors. HTR7 is coupled to G(s) G alpha proteins and mediates activation of adenylate cyclase activity. This Xenopus laevis (African clawed frog) protein is 5-hydroxytryptamine receptor 7 (htr7).